The primary structure comprises 192 residues: Adenylate kinase (192 aa).

10 to 18 (GVPGVGGTT) contributes to the ATP binding site.

The protein belongs to the archaeal adenylate kinase family. Monomer.

The protein localises to the cytoplasm. The catalysed reaction is AMP + ATP = 2 ADP. The chain is Adenylate kinase from Methanococcus maripaludis (strain DSM 14266 / JCM 13030 / NBRC 101832 / S2 / LL).